Reading from the N-terminus, the 325-residue chain is Transcription initiation factor IIB 2 (325 aa).

The segment covering 1 to 13 has biased composition (polar residues); sequence MSDSTIRTYSSDQ. The disordered stretch occupies residues 1-29; sequence MSDSTIRTYSSDQRQTDNDETVSTPDEDV. The segment at 28–58 adopts a TFIIB-type zinc-finger fold; that stretch reads DVLTCPECGGQVIDDEEHGESVCVDCGLVVE. Residues C32, C35, C50, and C53 each coordinate Zn(2+). Residues 73–93 form a disordered region; the sequence is STEKDEKSRVGAPTTNMMHDK. 2 tandem repeats follow at residues 144–227 and 238–319.

This sequence belongs to the TFIIB family.

Stabilizes TBP binding to an archaeal box-A promoter. Also responsible for recruiting RNA polymerase II to the pre-initiation complex (DNA-TBP-TFIIB). The chain is Transcription initiation factor IIB 2 from Halobacterium salinarum (strain ATCC 700922 / JCM 11081 / NRC-1) (Halobacterium halobium).